The primary structure comprises 432 residues: uncharacterized protein (432 aa).

Transmembrane regions (helical) follow at residues 35-55, 60-80, 112-132, 144-164, 185-205, 209-229, 242-262, 274-294, 313-333, 359-379, 384-404, and 408-428; these read VARV…VIYL, LPPA…IATG, VAGM…PLWS, VGLL…LGAL, LAVA…LWAA, AVAW…ASLL, AHSI…PVLL, GAVI…LSAM, LIAP…AAGL, AAAV…AAAL, LLGW…PMPL, and TVIA…AALA.

This sequence to M.tuberculosis Rv3630 and M.bovis Mb3654.

It localises to the cell membrane. This is an uncharacterized protein from Mycobacterium tuberculosis (strain CDC 1551 / Oshkosh).